The following is a 429-amino-acid chain: Glutamate-1-semialdehyde 2,1-aminomutase 2 (429 aa).

Lys-268 is modified (N6-(pyridoxal phosphate)lysine).

It belongs to the class-III pyridoxal-phosphate-dependent aminotransferase family. HemL subfamily. In terms of assembly, homodimer. Requires pyridoxal 5'-phosphate as cofactor.

It localises to the cytoplasm. The enzyme catalyses (S)-4-amino-5-oxopentanoate = 5-aminolevulinate. Its pathway is porphyrin-containing compound metabolism; protoporphyrin-IX biosynthesis; 5-aminolevulinate from L-glutamyl-tRNA(Glu): step 2/2. This Staphylococcus aureus (strain MSSA476) protein is Glutamate-1-semialdehyde 2,1-aminomutase 2.